The chain runs to 1050 residues: uncharacterized protein (1050 aa).

The Cytoplasmic segment spans residues 1-83 (MARLLTKSSQ…AVKLGTFEGC (83 aa)). 2 positions are modified to phosphoserine: Ser-9 and Ser-60. The residue at position 64 (Thr-64) is a Phosphothreonine. A helical membrane pass occupies residues 84–104 (FIPTTLNVLSILLYLRFPWII). Residues 105–112 (GEAGVLKT) lie on the Extracellular side of the membrane. A helical transmembrane segment spans residues 113-133 (LLMLFISYAVGIFTSLSISAI). Topologically, residues 134–146 (CTNGMVRGGGAYY) are cytoplasmic. A helical membrane pass occupies residues 147–169 (AVSRSIGPELGGSIGLIFYVGQI). The Extracellular portion of the chain corresponds to 170–202 (LNTGMNISGFVEPIISIFGKESGTISQFLPEGY). An N-linked (GlcNAc...) asparagine glycan is attached at Asn-175. The helical transmembrane segment at 203–223 (WWVFLYTTCVLAMCCILCCLG) threads the bilayer. At 224 to 232 (SAIFAKASN) the chain is on the cytoplasmic side. Residues 233-253 (ALFVVIILSTISIPISSIFVH) traverse the membrane as a helical segment. The Extracellular portion of the chain corresponds to 254-295 (PFKDPSLLVHFTGLKWSTLMKNLASAYTENEKGTGYESFKST). Ser-270 is modified (phosphoserine). Residue Thr-271 is modified to Phosphothreonine. Residues 296-316 (FGVFFPATAGLLAGASMSGDL) traverse the membrane as a helical segment. Over 317 to 334 (KAPSRSIPKGTISSQATT) the chain is Cytoplasmic. A helical transmembrane segment spans residues 335 to 355 (FLLYLLVILCVGASVTRTGLL). Topologically, residues 356–368 (LDMDVMEHISLHP) are extracellular. Residues 369 to 389 (LFIISGILSSGAFSSFMGIFG) traverse the membrane as a helical segment. Residues 390–417 (AAKLLQAIARDDLIPGMFFFAKGSSYDD) lie on the Cytoplasmic side of the membrane. The chain crosses the membrane as a helical span at residues 418–438 (IPYVAIGVTYLITQISLFWDI). Over 439-442 (NMLS) the chain is Extracellular. Residues 443-463 (SMITMTFLLTFGFINLSCFLL) traverse the membrane as a helical segment. At 464-480 (RISSTPNFRPTFRYFNR) the chain is on the cytoplasmic side. A helical transmembrane segment spans residues 481 to 497 (RTTLVGTILSFGVMFYV). The Extracellular portion of the chain corresponds to 498-499 (DR). A helical membrane pass occupies residues 500–520 (LNAFISFLIAGILVVVIYFTC). Topologically, residues 521-1050 (PPKNWGDVSQ…SKSLTITTAL (530 aa)) are cytoplasmic. Ser-901 bears the Phosphoserine mark. The segment at 915–943 (ETESSFGNRSLSPKQENRRTYSDSTIESS) is disordered. The span at 916-928 (TESSFGNRSLSPK) shows a compositional bias: polar residues. Position 936 is a phosphoserine (Ser-936). The residue at position 939 (Thr-939) is a Phosphothreonine.

The protein belongs to the SLC12A transporter family.

The protein resides in the membrane. This is an uncharacterized protein from Schizosaccharomyces pombe (strain 972 / ATCC 24843) (Fission yeast).